We begin with the raw amino-acid sequence, 371 residues long: Chorismate synthase (371 aa).

NADP(+) is bound by residues Arg-48 and Arg-54. FMN-binding positions include 125–127, 238–239, Gly-278, 293–297, and Arg-319; these read RSS, NA, and KPTSS.

The protein belongs to the chorismate synthase family. As to quaternary structure, homotetramer. FMNH2 serves as cofactor.

It catalyses the reaction 5-O-(1-carboxyvinyl)-3-phosphoshikimate = chorismate + phosphate. Its pathway is metabolic intermediate biosynthesis; chorismate biosynthesis; chorismate from D-erythrose 4-phosphate and phosphoenolpyruvate: step 7/7. In terms of biological role, catalyzes the anti-1,4-elimination of the C-3 phosphate and the C-6 proR hydrogen from 5-enolpyruvylshikimate-3-phosphate (EPSP) to yield chorismate, which is the branch point compound that serves as the starting substrate for the three terminal pathways of aromatic amino acid biosynthesis. This reaction introduces a second double bond into the aromatic ring system. The sequence is that of Chorismate synthase from Saccharophagus degradans (strain 2-40 / ATCC 43961 / DSM 17024).